The following is a 475-amino-acid chain: Ribulose bisphosphate carboxylase large chain (475 aa).

Positions 1-2 are excised as a propeptide; sequence MS. Pro-3 carries the N-acetylproline modification. Substrate-binding residues include Asn-123 and Thr-173. Catalysis depends on Lys-175, which acts as the Proton acceptor. Lys-177 is a substrate binding site. Positions 201, 203, and 204 each coordinate Mg(2+). Lys-201 is subject to N6-carboxylysine. His-294 acts as the Proton acceptor in catalysis. Substrate contacts are provided by Arg-295, His-327, and Ser-379.

It belongs to the RuBisCO large chain family. Type I subfamily. In terms of assembly, heterohexadecamer of 8 large chains and 8 small chains; disulfide-linked. The disulfide link is formed within the large subunit homodimers. Mg(2+) is required as a cofactor. Post-translationally, the disulfide bond which can form in the large chain dimeric partners within the hexadecamer appears to be associated with oxidative stress and protein turnover.

The protein resides in the plastid. It is found in the chloroplast. It catalyses the reaction 2 (2R)-3-phosphoglycerate + 2 H(+) = D-ribulose 1,5-bisphosphate + CO2 + H2O. The catalysed reaction is D-ribulose 1,5-bisphosphate + O2 = 2-phosphoglycolate + (2R)-3-phosphoglycerate + 2 H(+). Functionally, ruBisCO catalyzes two reactions: the carboxylation of D-ribulose 1,5-bisphosphate, the primary event in carbon dioxide fixation, as well as the oxidative fragmentation of the pentose substrate in the photorespiration process. Both reactions occur simultaneously and in competition at the same active site. The sequence is that of Ribulose bisphosphate carboxylase large chain from Gnetum parvifolium (Small-leaved jointfir).